The primary structure comprises 340 residues: TPDYGHYDDKDTLDANTPVDKTSNTLRVPDILALVIFAVVFLVGVLRNALVVWVTAFEAKRTINAIWFLNLAVADFLSCLALPILFTSIVQHHHWPFGGAACRILPSLILLNMYASILLLATISADRFLLVFNPIWCQNFRGAGLAWIACAVAWGLALLLTIPSFLYRVVREEYFPPKVLCGVDHGHDKRRERAVAIARLVLGFVWPLLTLTMCYTFLLLRTWSRRATRSTKTLKVVVAVVASFFIFWLPYQVTGMMMSFLEPSSPTFLLLKKLDSLCISFAYINCCINPIIYVVAGQGFQGRLRKSLPSLLRNVLTEESMVRESKSFTRSTVDTMAQKT.

The Extracellular segment spans residues 1-30 (TPDYGHYDDKDTLDANTPVDKTSNTLRVPD). Residues 3 to 11 (DYGHYDDKD) are required for CHIPS binding. Sulfotyrosine is present on residues Y4 and Y7. Residues 14-23 (DANTPVDKTS) are involved in C5a binding. The chain crosses the membrane as a helical span at residues 31 to 57 (ILALVIFAVVFLVGVLRNALVVWVTAF). The Cytoplasmic portion of the chain corresponds to 58 to 62 (EAKRT). The chain crosses the membrane as a helical span at residues 63-86 (INAIWFLNLAVADFLSCLALPILF). The Extracellular portion of the chain corresponds to 87-103 (TSIVQHHHWPFGGAACR). A disulfide bridge links C102 with C181. The helical transmembrane segment at 104–125 (ILPSLILLNMYASILLLATISA) threads the bilayer. Residues 126–146 (DRFLLVFNPIWCQNFRGAGLA) are Cytoplasmic-facing. Residues 147 to 167 (WIACAVAWGLALLLTIPSFLY) form a helical membrane-spanning segment. Residues 168 to 193 (RVVREEYFPPKVLCGVDHGHDKRRER) lie on the Extracellular side of the membrane. A helical membrane pass occupies residues 194–219 (AVAIARLVLGFVWPLLTLTMCYTFLL). Residues 220–235 (LRTWSRRATRSTKTLK) are Cytoplasmic-facing. A helical transmembrane segment spans residues 236–258 (VVVAVVASFFIFWLPYQVTGMMM). Residues 259–275 (SFLEPSSPTFLLLKKLD) lie on the Extracellular side of the membrane. Residues 276-296 (SLCISFAYINCCINPIIYVVA) form a helical membrane-spanning segment. Over 297–340 (GQGFQGRLRKSLPSLLRNVLTEESMVRESKSFTRSTVDTMAQKT) the chain is Cytoplasmic. Phosphoserine is present on residues S307, S310, S320, S325, S327, and S331.

The protein belongs to the G-protein coupled receptor 1 family. Homodimer. May also form higher-order oligomers. Interacts (when phosphorylated) with ARRB1 and ARRB2; the interaction is associated with internalization of C5aR. Interacts (via N-terminal domain) with S.aureus chemotaxis inhibitory protein (CHIPS); the interaction blocks the receptor and may thus inhibit the immune response. Sulfation plays a critical role in the association of C5aR with C5a, but no significant role in the ability of the receptor to transduce a signal and mobilize calcium in response to a small peptide agonist. Sulfation at Tyr-7 is important for CHIPS binding. In terms of processing, phosphorylated on serine residues in response to C5a binding, resulting in internalization of the receptor and short-term desensitization to C5a.

The protein localises to the cell membrane. Its subcellular location is the cytoplasmic vesicle. Its function is as follows. Receptor for the chemotactic and inflammatory peptide anaphylatoxin C5a. The ligand interacts with at least two sites on the receptor: a high-affinity site on the extracellular N-terminus, and a second site in the transmembrane region which activates downstream signaling events. Receptor activation stimulates chemotaxis, granule enzyme release, intracellular calcium release and superoxide anion production. The chain is C5a anaphylatoxin chemotactic receptor 1 (C5AR1) from Macaca mulatta (Rhesus macaque).